The chain runs to 486 residues: Transmembrane protein 39A (486 aa).

The N-linked (GlcNAc...) asparagine glycan is linked to N31. A run of 8 helical transmembrane segments spans residues 72–92 (SLFFEFLFFIYLLIVLFIQYI), 110–130 (TSLNFHLIDYYLAAFITVMLA), 155–175 (LILARLVLLTLCGWVLCWTLV), 182–202 (SVLNLLFLGYPFGVYVPLYCF), 285–305 (EVLFNSLFSAYYVAFLPLCFV), 317–337 (CEHLIMVWINAFVMLTTQLLP), 418–438 (VLNLLILIEGSVVFYQLYSLL), and 444–464 (NHTLSMALILFCNYYVLFKLL).

Belongs to the TMEM39 family. In terms of assembly, interacts with SACM1L, SEC23A and SEC24A.

It localises to the endoplasmic reticulum membrane. Regulates autophagy by controlling the spatial distribution and levels of the intracellular phosphatidylinositol 4-phosphate (PtdIns(4)P) pools. Modulates (PtdIns(4)P) levels by regulating the ER-to-Golgi trafficking of the phosphatidylinositide phosphatase SACM1L. This Mus musculus (Mouse) protein is Transmembrane protein 39A (Tmem39a).